A 94-amino-acid polypeptide reads, in one-letter code: Venom protein 59.1 (94 aa).

The first 22 residues, 1 to 22 (MNSREMFCVFILFASFFYCSYA), serve as a signal peptide directing secretion. 6 cysteine pairs are disulfide-bonded: cysteine 19/cysteine 47, cysteine 26/cysteine 49, cysteine 32/cysteine 50, cysteine 38/cysteine 53, cysteine 61/cysteine 76, and cysteine 70/cysteine 91. One can recognise an IGFBP N-terminal domain in the interval 23 to 94 (EQECNCDKSC…GEALEICLRA (72 aa)).

As to expression, expressed by the venom gland.

The protein localises to the secreted. The protein is Venom protein 59.1 of Lychas mucronatus (Chinese swimming scorpion).